The primary structure comprises 132 residues: Small ribosomal subunit protein uS8 (132 aa).

It belongs to the universal ribosomal protein uS8 family. In terms of assembly, part of the 30S ribosomal subunit. Contacts proteins S5 and S12.

In terms of biological role, one of the primary rRNA binding proteins, it binds directly to 16S rRNA central domain where it helps coordinate assembly of the platform of the 30S subunit. The protein is Small ribosomal subunit protein uS8 of Rhizobium johnstonii (strain DSM 114642 / LMG 32736 / 3841) (Rhizobium leguminosarum bv. viciae).